Here is a 267-residue protein sequence, read N- to C-terminus: 4-hydroxy-tetrahydrodipicolinate reductase (267 aa).

10 to 15 lines the NAD(+) pocket; it reads GAGGKM. Arg38 provides a ligand contact to NADP(+). NAD(+) is bound by residues 100–102 and 126–129; these read GTT and APNF. The active-site Proton donor/acceptor is His156. Position 157 (His157) interacts with (S)-2,3,4,5-tetrahydrodipicolinate. Lys160 (proton donor) is an active-site residue. 166-167 is a binding site for (S)-2,3,4,5-tetrahydrodipicolinate; the sequence is GT.

The protein belongs to the DapB family.

The protein resides in the cytoplasm. It catalyses the reaction (S)-2,3,4,5-tetrahydrodipicolinate + NAD(+) + H2O = (2S,4S)-4-hydroxy-2,3,4,5-tetrahydrodipicolinate + NADH + H(+). It carries out the reaction (S)-2,3,4,5-tetrahydrodipicolinate + NADP(+) + H2O = (2S,4S)-4-hydroxy-2,3,4,5-tetrahydrodipicolinate + NADPH + H(+). Its pathway is amino-acid biosynthesis; L-lysine biosynthesis via DAP pathway; (S)-tetrahydrodipicolinate from L-aspartate: step 4/4. Functionally, catalyzes the conversion of 4-hydroxy-tetrahydrodipicolinate (HTPA) to tetrahydrodipicolinate. The polypeptide is 4-hydroxy-tetrahydrodipicolinate reductase (Desulfitobacterium hafniense (strain DSM 10664 / DCB-2)).